The following is a 433-amino-acid chain: D-amino acid dehydrogenase (433 aa).

Position 3–17 (3–17 (VLVLGSGVIGTASAY)) interacts with FAD.

This sequence belongs to the DadA oxidoreductase family. It depends on FAD as a cofactor.

It catalyses the reaction a D-alpha-amino acid + A + H2O = a 2-oxocarboxylate + AH2 + NH4(+). It functions in the pathway amino-acid degradation; D-alanine degradation; NH(3) and pyruvate from D-alanine: step 1/1. Its function is as follows. Oxidative deamination of D-amino acids. This Pseudomonas putida (strain W619) protein is D-amino acid dehydrogenase.